The primary structure comprises 496 residues: Zinc finger and SCAN domain-containing protein 5C (496 aa).

Residues 1–19 (MAANCTSSWSLGESCNSPG) show a composition bias toward polar residues. Residues 1–38 (MAANCTSSWSLGESCNSPGSEPPQSMPSPATQLGNHDS) are disordered. The SCAN box domain occupies 44-126 (HVNFRMFSCP…DLLRNNRRPK (83 aa)). Disordered stretches follow at residues 149–188 (EAPASVRDDPRHVSSQRTSSVNQMCPEEGQASQELQTLPR) and 203–347 (PETT…HPSG). Over residues 161-171 (VSSQRTSSVNQ) the composition is skewed to polar residues. Positions 210-223 (GDPKALRPKPTLEK) are enriched in basic and acidic residues. Residues 234–247 (GLTSPEPQLPNSPT) show a composition bias toward polar residues. Positions 253 to 263 (KEGKEPQKRAS) are enriched in basic and acidic residues. C2H2-type zinc fingers lie at residues 356-378 (FACEVCGKRFKYRGKLAVHTRSH), 384-406 (FQCNLCGKRFMQRIGLQFHQRTH), 412-434 (YTCDICQKQFTQKSYLKCHKRSH), 440-462 (FECKDCKKVFTYKANLKEHQRIH), and 468-490 (HKCSKCPRAFGRPATLRRHQKTH).

The protein localises to the nucleus. Functionally, may be involved in transcriptional regulation. The polypeptide is Zinc finger and SCAN domain-containing protein 5C (Homo sapiens (Human)).